Consider the following 261-residue polypeptide: MTHQSHAYHMVKPSPWPLTGALSALLMTSGLAMWFHFHSMTLLMLGLLTNTLTMYQWWRDVTRESTYQGHHTPPVQKGLRYGMILFITSEVFFFAGFFWAFYHSSLAPTPQLGGHWPPTGITPLNPLEVPLLNTSVLLASGVSITWAHHSLMENNRNQMIQALLITILLGLYFTLLQASEYFESPFTISDGIYGSTFFVATGFHGLHVIIGSTFLTICFIRQLMFHFTSKHHFGFEAAAWYWHFVDVVWLFLYVSIYWWGS.

At 1–15 (MTHQSHAYHMVKPSP) the chain is on the mitochondrial matrix side. A helical membrane pass occupies residues 16–34 (WPLTGALSALLMTSGLAMW). The Mitochondrial intermembrane segment spans residues 35-40 (FHFHSM). The helical transmembrane segment at 41–66 (TLLMLGLLTNTLTMYQWWRDVTREST) threads the bilayer. Over 67 to 72 (YQGHHT) the chain is Mitochondrial matrix. The helical transmembrane segment at 73–105 (PPVQKGLRYGMILFITSEVFFFAGFFWAFYHSS) threads the bilayer. Over 106 to 128 (LAPTPQLGGHWPPTGITPLNPLE) the chain is Mitochondrial intermembrane. The chain crosses the membrane as a helical span at residues 129 to 152 (VPLLNTSVLLASGVSITWAHHSLM). Residues 153 to 155 (ENN) are Mitochondrial matrix-facing. A helical membrane pass occupies residues 156-183 (RNQMIQALLITILLGLYFTLLQASEYFE). The Mitochondrial intermembrane portion of the chain corresponds to 184–190 (SPFTISD). Residues 191–223 (GIYGSTFFVATGFHGLHVIIGSTFLTICFIRQL) traverse the membrane as a helical segment. Residues 224-232 (MFHFTSKHH) lie on the Mitochondrial matrix side of the membrane. Residues 233-256 (FGFEAAAWYWHFVDVVWLFLYVSI) traverse the membrane as a helical segment. The Mitochondrial intermembrane segment spans residues 257–261 (YWWGS).

It belongs to the cytochrome c oxidase subunit 3 family. As to quaternary structure, component of the cytochrome c oxidase (complex IV, CIV), a multisubunit enzyme composed of 14 subunits. The complex is composed of a catalytic core of 3 subunits MT-CO1, MT-CO2 and MT-CO3, encoded in the mitochondrial DNA, and 11 supernumerary subunits COX4I1 (or COX4I2), COX5A, COX5B, COX6A1 (or COX6A2), COX6B1 (or COX6B2), COX6C, COX7A2 (or COX7A1), COX7B, COX7C, COX8A and NDUFA4, which are encoded in the nuclear genome. The complex exists as a monomer or a dimer and forms supercomplexes (SCs) in the inner mitochondrial membrane with NADH-ubiquinone oxidoreductase (complex I, CI) and ubiquinol-cytochrome c oxidoreductase (cytochrome b-c1 complex, complex III, CIII), resulting in different assemblies (supercomplex SCI(1)III(2)IV(1) and megacomplex MCI(2)III(2)IV(2)).

The protein localises to the mitochondrion inner membrane. It carries out the reaction 4 Fe(II)-[cytochrome c] + O2 + 8 H(+)(in) = 4 Fe(III)-[cytochrome c] + 2 H2O + 4 H(+)(out). In terms of biological role, component of the cytochrome c oxidase, the last enzyme in the mitochondrial electron transport chain which drives oxidative phosphorylation. The respiratory chain contains 3 multisubunit complexes succinate dehydrogenase (complex II, CII), ubiquinol-cytochrome c oxidoreductase (cytochrome b-c1 complex, complex III, CIII) and cytochrome c oxidase (complex IV, CIV), that cooperate to transfer electrons derived from NADH and succinate to molecular oxygen, creating an electrochemical gradient over the inner membrane that drives transmembrane transport and the ATP synthase. Cytochrome c oxidase is the component of the respiratory chain that catalyzes the reduction of oxygen to water. Electrons originating from reduced cytochrome c in the intermembrane space (IMS) are transferred via the dinuclear copper A center (CU(A)) of subunit 2 and heme A of subunit 1 to the active site in subunit 1, a binuclear center (BNC) formed by heme A3 and copper B (CU(B)). The BNC reduces molecular oxygen to 2 water molecules using 4 electrons from cytochrome c in the IMS and 4 protons from the mitochondrial matrix. This chain is Cytochrome c oxidase subunit 3 (MT-CO3), found in Homo sapiens (Human).